Reading from the N-terminus, the 470-residue chain is Light-independent protochlorophyllide reductase subunit N (470 aa).

The [4Fe-4S] cluster site is built by C24, C49, and C109.

This sequence belongs to the BchN/ChlN family. In terms of assembly, protochlorophyllide reductase is composed of three subunits; ChlL, ChlN and ChlB. Forms a heterotetramer of two ChlB and two ChlN subunits. [4Fe-4S] cluster serves as cofactor.

The catalysed reaction is chlorophyllide a + oxidized 2[4Fe-4S]-[ferredoxin] + 2 ADP + 2 phosphate = protochlorophyllide a + reduced 2[4Fe-4S]-[ferredoxin] + 2 ATP + 2 H2O. It participates in porphyrin-containing compound metabolism; chlorophyll biosynthesis (light-independent). In terms of biological role, component of the dark-operative protochlorophyllide reductase (DPOR) that uses Mg-ATP and reduced ferredoxin to reduce ring D of protochlorophyllide (Pchlide) to form chlorophyllide a (Chlide). This reaction is light-independent. The NB-protein (ChlN-ChlB) is the catalytic component of the complex. This Acaryochloris marina (strain MBIC 11017) protein is Light-independent protochlorophyllide reductase subunit N.